A 194-amino-acid chain; its full sequence is Calcium channel flower (194 aa).

Transmembrane regions (helical) follow at residues 35–55 (LGIV…FSII), 66–88 (IIQM…VCFE), and 113–133 (AIPP…GLIF).

Belongs to the calcium channel flower family. Homomultimer. Associates with the dally/ magu complex.

Its subcellular location is the cytoplasmic vesicle. It is found in the secretory vesicle. It localises to the synaptic vesicle membrane. The protein localises to the presynaptic cell membrane. The protein resides in the endosome. Its activity is regulated as follows. Channel activity is inhibited by La(3+), which reduces Ca(2+) influx and thus inhibits it's function in promoting activity-dependent bulk endocytosis (ADBE) in response to high stimuli. Its function is as follows. Transmembrane protein which mediates synaptic endocytosis, fitness-based cell culling, neuronal culling, morphogen gradient scaling, and calcium transport. Regulates synaptic endocytosis and hence couples exo- with endocytosis. Controls two major modes of synaptic vesicle (SV) endocytosis in the synaptic boutons of neuromuscular junctions (NMJs); Ca(2+) channel-independent Clathrin-mediated endocytosis (CME) in response to mild stimulation, and Ca(2+) channel-dependent activity-dependent bulk endocytosis (ADBE) in response to strong stimulation. Functions in ADBE and subsequent SV reformation from bulk endosomes by initiating Ca(2+) channel-dependent phosphatidylinositol 4,5-bisphosphate (PtdIns(4,5)P2) compartmentalization in synaptic boutons. There it acts at the periactive zone to provide the low Ca(2+) levels required to initiate Calcineurin activation and upregulate PtdIns(4,5)P2. Conversely PtdIns(4,5)P2 enhances fwe Ca(2+) channel-activity, establishing a positive feedback loop that induces PtdIns(4,5)P2 microdomain at the periactive zone. These microdomains trigger bulk membrane invagination (i.e. ADBE) by triggering actin polymerization while also promoting localization of fwe to bulk endosomes, thereby removing the ADBE trigger to reduce endocytosis and prevent excess membrane uptake. PtdIns(4,5)P2 then promotes SV reformation from the bulk endosomes, to coordinate ADBE and subsequent SV reformation. Different combinations of the flower isoforms at the cell membrane are also required for the identification and elimination of suboptimal or supernumerary cells during development, regeneration, and adulthood. Required for the recognition and elimination of unfit cells in the developing wing during cell competition. In the developing pupal retina, mediates the elimination of unwanted postmitotic neurons, including supernumerary photoreceptor neurons that form at the periphery of the retina and are contained within incomplete ommatidia units. Also required for efficient elimination and replacement of old neurons by newly generated neurons during regeneration in the adult brain following mechanical injury. Downstream of the flower fitness fingerprints, cells identified as unwanted or unfit are eliminated via apoptosis through the expression of ahuizotl (azot). However, the cells marked for elimination by the flower isoforms only undergo apoptosis if additional thresholds are met; (1) their neighboring fit/healthy cells express different levels of the fwe isoforms, and (2) the levels of the protective signal SPARC expressed by the loser or unwanted cells are unable to inhibit caspase activation. These additional thresholds for flower-mediated apoptosis, allows useful cells to recover from transient and limited stress before they are unnecessarily eliminated. Functions with dally and magu in a mechanism of scaling, which utilises apoptosis to ensure that the dpp morphogen gradient, which mediates organ growth, remains proportional to the size of the growing wing. In this mechanism, fwe represses dally- and Magu-dependent activity in expanding the gradient, and dally/Magu inhibits fwe-dependent apoptosis to keep cell death rate low. When the levels of these different proteins are optimally regulated the gradient correctly scales with organ growth but when this fails, fwe-mediated apoptosis is activated to trim the developing tissue to match the correct size of the gradient. The sequence is that of Calcium channel flower from Drosophila yakuba (Fruit fly).